A 325-amino-acid chain; its full sequence is Glutarate 2-hydroxylase (325 aa).

3 residues coordinate Fe cation: His-160, Asp-162, and His-292.

It belongs to the glutarate hydroxylase family. As to quaternary structure, homotetramer. The cofactor is Fe(2+).

The enzyme catalyses glutarate + 2-oxoglutarate + O2 = (S)-2-hydroxyglutarate + succinate + CO2. Its pathway is amino-acid degradation. Acts as an alpha-ketoglutarate-dependent dioxygenase catalyzing hydroxylation of glutarate (GA) to L-2-hydroxyglutarate (L2HG). Functions in a L-lysine degradation pathway that proceeds via cadaverine, glutarate and L-2-hydroxyglutarate. This is Glutarate 2-hydroxylase from Escherichia coli (strain 55989 / EAEC).